A 429-amino-acid polypeptide reads, in one-letter code: Probable M18 family aminopeptidase 2 (429 aa).

Histidine 82, histidine 156, and histidine 401 together coordinate Zn(2+).

The protein belongs to the peptidase M18 family. Zn(2+) is required as a cofactor.

The sequence is that of Probable M18 family aminopeptidase 2 from Pseudomonas entomophila (strain L48).